The sequence spans 351 residues: Dihydroorotate dehydrogenase (quinone) (351 aa).

Residues 67–71 and T91 each bind FMN; that span reads AGFDK. K71 provides a ligand contact to substrate. Position 116-120 (116-120) interacts with substrate; it reads NAMGF. FMN contacts are provided by N145 and N178. N178 is a substrate binding site. S181 acts as the Nucleophile in catalysis. Residue N183 coordinates substrate. The FMN site is built by K214 and T242. A substrate-binding site is contributed by 243-244; that stretch reads NT. FMN-binding positions include G262, G291, and 312–313; that span reads YS.

Belongs to the dihydroorotate dehydrogenase family. Type 2 subfamily. As to quaternary structure, monomer. Requires FMN as cofactor.

The protein resides in the cell membrane. It carries out the reaction (S)-dihydroorotate + a quinone = orotate + a quinol. It functions in the pathway pyrimidine metabolism; UMP biosynthesis via de novo pathway; orotate from (S)-dihydroorotate (quinone route): step 1/1. Catalyzes the conversion of dihydroorotate to orotate with quinone as electron acceptor. The protein is Dihydroorotate dehydrogenase (quinone) (pyrD) of Helicobacter pylori (strain J99 / ATCC 700824) (Campylobacter pylori J99).